We begin with the raw amino-acid sequence, 396 residues long: Elongation factor Tu (396 aa).

The tr-type G domain maps to 10 to 206 (KPHVNVGTIG…ALDTYIPEPE (197 aa)). The segment at 19–26 (GHVDHGKT) is G1. 19–26 (GHVDHGKT) is a binding site for GTP. Residue Thr26 participates in Mg(2+) binding. Residues 60–64 (GITIN) form a G2 region. The tract at residues 81-84 (DCPG) is G3. GTP-binding positions include 81 to 85 (DCPGH) and 136 to 139 (NKCD). A G4 region spans residues 136-139 (NKCD). The tract at residues 174 to 176 (SAL) is G5.

It belongs to the TRAFAC class translation factor GTPase superfamily. Classic translation factor GTPase family. EF-Tu/EF-1A subfamily. As to quaternary structure, monomer.

It is found in the cytoplasm. It catalyses the reaction GTP + H2O = GDP + phosphate + H(+). GTP hydrolase that promotes the GTP-dependent binding of aminoacyl-tRNA to the A-site of ribosomes during protein biosynthesis. In Acinetobacter baylyi (strain ATCC 33305 / BD413 / ADP1), this protein is Elongation factor Tu.